A 384-amino-acid polypeptide reads, in one-letter code: 4-hydroxy-3-methylbut-2-en-1-yl diphosphate synthase (flavodoxin) 1 (384 aa).

Cys281, Cys284, Cys316, and Glu323 together coordinate [4Fe-4S] cluster.

Belongs to the IspG family. Requires [4Fe-4S] cluster as cofactor.

It catalyses the reaction (2E)-4-hydroxy-3-methylbut-2-enyl diphosphate + oxidized [flavodoxin] + H2O + 2 H(+) = 2-C-methyl-D-erythritol 2,4-cyclic diphosphate + reduced [flavodoxin]. The protein operates within isoprenoid biosynthesis; isopentenyl diphosphate biosynthesis via DXP pathway; isopentenyl diphosphate from 1-deoxy-D-xylulose 5-phosphate: step 5/6. Its function is as follows. Converts 2C-methyl-D-erythritol 2,4-cyclodiphosphate (ME-2,4cPP) into 1-hydroxy-2-methyl-2-(E)-butenyl 4-diphosphate. This Streptomyces coelicolor (strain ATCC BAA-471 / A3(2) / M145) protein is 4-hydroxy-3-methylbut-2-en-1-yl diphosphate synthase (flavodoxin) 1.